The chain runs to 545 residues: Chaperonin GroEL 1 (545 aa).

ATP-binding positions include 29 to 32 (TLGP), 86 to 90 (DGTTT), G413, 477 to 479 (NAA), and D493.

The protein belongs to the chaperonin (HSP60) family. In terms of assembly, forms a cylinder of 14 subunits composed of two heptameric rings stacked back-to-back. Interacts with the co-chaperonin GroES.

The protein localises to the cytoplasm. The catalysed reaction is ATP + H2O + a folded polypeptide = ADP + phosphate + an unfolded polypeptide.. In terms of biological role, together with its co-chaperonin GroES, plays an essential role in assisting protein folding. The GroEL-GroES system forms a nano-cage that allows encapsulation of the non-native substrate proteins and provides a physical environment optimized to promote and accelerate protein folding. The protein is Chaperonin GroEL 1 of Arthrobacter sp. (strain FB24).